Reading from the N-terminus, the 173-residue chain is Adenine phosphoribosyltransferase (173 aa).

Belongs to the purine/pyrimidine phosphoribosyltransferase family. As to quaternary structure, homodimer.

The protein localises to the cytoplasm. The enzyme catalyses AMP + diphosphate = 5-phospho-alpha-D-ribose 1-diphosphate + adenine. Its pathway is purine metabolism; AMP biosynthesis via salvage pathway; AMP from adenine: step 1/1. Catalyzes a salvage reaction resulting in the formation of AMP, that is energically less costly than de novo synthesis. This is Adenine phosphoribosyltransferase from Listeria monocytogenes serotype 4b (strain CLIP80459).